Consider the following 817-residue polypeptide: Protein Jade-3 (817 aa).

Positions 1 to 38 are disordered; the sequence is MKRLRNLSSSDSSDNESPSTSFSSCFQHKGKGKCTADD. Over residues 8–24 the composition is skewed to low complexity; the sequence is SSSDSSDNESPSTSFSS. Residues 202–252 form a PHD-type 1 zinc finger; the sequence is DVICDVCRSPDSEEGNDMVFCDRCNICVHQACYGILKVPEGSWLCRTCVLG. A C2HC pre-PHD-type zinc finger spans residues 254–288; sequence HPQCILCPKTGGAMKATRTGTKWAHVSCALWIPEV. The PHD-type 2 zinc-finger motif lies at 312 to 368; the sequence is LVCSLCKLKTGACIQCSVKSCITAFHVTCAFEHSLEMKTILDEGDEVKFKSYCLKHS. 3 disordered regions span residues 375–396, 665–689, and 719–817; these read ISEQEEPHKTHSDNRPTESERT, NGVLSSGDRTQRDSSSQTSPGQNSE, and LVRT…SVQR. Residues 379–396 are compositionally biased toward basic and acidic residues; sequence EEPHKTHSDNRPTESERT. Residues 667–689 show a composition bias toward polar residues; the sequence is VLSSGDRTQRDSSSQTSPGQNSE. Over residues 722–743 the composition is skewed to basic and acidic residues; that stretch reads TTEDLRSSEKPQRRQSVKERLW. Over residues 747 to 758 the composition is skewed to polar residues; sequence PADTQTSGTPYQ. Residues 777 to 799 show a composition bias toward basic and acidic residues; that stretch reads DENKDHMLLRRNSRESPNRDSCR. The segment covering 801-810 has biased composition (basic residues); sequence SRIRGKRKMT.

The protein belongs to the JADE family. In terms of assembly, component of the HBO1 complex.

Functionally, scaffold subunit of some HBO1 complexes, which have a histone H4 acetyltransferase activity. The sequence is that of Protein Jade-3 (jade3) from Xenopus tropicalis (Western clawed frog).